The sequence spans 199 residues: Holliday junction branch migration complex subunit RuvA (199 aa).

Positions 1–63 (MIGCLIGEVF…EDAQQLYGFS (63 aa)) are domain I. The interval 64-142 (DAQEKTIFRT…TLAQGTSSAA (79 aa)) is domain II. The segment at 143-150 (ALPQIQFV) is flexible linker. The domain III stretch occupies residues 150-199 (VSNSPVAEAEAALQSLGYKPLEAQKAVAAVKADYTESADIIRAALKSMMK).

This sequence belongs to the RuvA family. In terms of assembly, homotetramer. Forms an RuvA(8)-RuvB(12)-Holliday junction (HJ) complex. HJ DNA is sandwiched between 2 RuvA tetramers; dsDNA enters through RuvA and exits via RuvB. An RuvB hexamer assembles on each DNA strand where it exits the tetramer. Each RuvB hexamer is contacted by two RuvA subunits (via domain III) on 2 adjacent RuvB subunits; this complex drives branch migration. In the full resolvosome a probable DNA-RuvA(4)-RuvB(12)-RuvC(2) complex forms which resolves the HJ.

It is found in the cytoplasm. Functionally, the RuvA-RuvB-RuvC complex processes Holliday junction (HJ) DNA during genetic recombination and DNA repair, while the RuvA-RuvB complex plays an important role in the rescue of blocked DNA replication forks via replication fork reversal (RFR). RuvA specifically binds to HJ cruciform DNA, conferring on it an open structure. The RuvB hexamer acts as an ATP-dependent pump, pulling dsDNA into and through the RuvAB complex. HJ branch migration allows RuvC to scan DNA until it finds its consensus sequence, where it cleaves and resolves the cruciform DNA. The sequence is that of Holliday junction branch migration complex subunit RuvA from Acinetobacter baumannii (strain ACICU).